A 363-amino-acid chain; its full sequence is Chorismate synthase (363 aa).

NADP(+) contacts are provided by Arg-48 and Arg-54. FMN-binding positions include 125 to 127 (RSS), 237 to 238 (NA), Gly-277, 292 to 296 (KPTSS), and Arg-318.

Belongs to the chorismate synthase family. Homotetramer. The cofactor is FMNH2.

The enzyme catalyses 5-O-(1-carboxyvinyl)-3-phosphoshikimate = chorismate + phosphate. It participates in metabolic intermediate biosynthesis; chorismate biosynthesis; chorismate from D-erythrose 4-phosphate and phosphoenolpyruvate: step 7/7. Functionally, catalyzes the anti-1,4-elimination of the C-3 phosphate and the C-6 proR hydrogen from 5-enolpyruvylshikimate-3-phosphate (EPSP) to yield chorismate, which is the branch point compound that serves as the starting substrate for the three terminal pathways of aromatic amino acid biosynthesis. This reaction introduces a second double bond into the aromatic ring system. This is Chorismate synthase from Pseudomonas fluorescens (strain Pf0-1).